The primary structure comprises 584 residues: Sperm-associated microtubule inner protein 4 (584 aa).

It is found in the cytoplasm. It localises to the cytoskeleton. Its subcellular location is the microtubule organizing center. The protein localises to the centrosome. The protein resides in the flagellum axoneme. In terms of biological role, microtubule inner protein (MIP) part of the dynein-decorated doublet microtubules (DMTs) in flagellum axoneme. May serve to reinforce and thus stabilize the microtubule structure in the sperm flagella. The polypeptide is Sperm-associated microtubule inner protein 4 (SPMIP4) (Bos taurus (Bovine)).